Here is a 68-residue protein sequence, read N- to C-terminus: Protein SlyX homolog (68 aa).

This sequence belongs to the SlyX family.

This is Protein SlyX homolog from Pseudomonas fluorescens (strain ATCC BAA-477 / NRRL B-23932 / Pf-5).